Here is a 357-residue protein sequence, read N- to C-terminus: UPF0283 membrane protein BCAN_A1047 (357 aa).

A disordered region spans residues 1–36 (MSDKTPRKPTAFRLEQPARVSAASEQEEPRRPRAVK). The span at 27 to 36 (EEPRRPRAVK) shows a compositional bias: basic and acidic residues. 2 helical membrane passes run 78-98 (ILFGALGILVSFAIGIWTEDL) and 109-129 (LGWTALGVAMVALAAFAAIIL).

Belongs to the UPF0283 family.

It localises to the cell inner membrane. The sequence is that of UPF0283 membrane protein BCAN_A1047 from Brucella canis (strain ATCC 23365 / NCTC 10854 / RM-666).